The primary structure comprises 425 residues: Enolase (425 aa).

Gln-163 is a (2R)-2-phosphoglycerate binding site. The active-site Proton donor is Glu-205. Asp-242, Glu-285, and Asp-312 together coordinate Mg(2+). (2R)-2-phosphoglycerate is bound by residues Lys-337, Arg-366, Ser-367, and Lys-388. The active-site Proton acceptor is Lys-337.

This sequence belongs to the enolase family. Mg(2+) serves as cofactor.

The protein localises to the cytoplasm. Its subcellular location is the secreted. It localises to the cell surface. It carries out the reaction (2R)-2-phosphoglycerate = phosphoenolpyruvate + H2O. It functions in the pathway carbohydrate degradation; glycolysis; pyruvate from D-glyceraldehyde 3-phosphate: step 4/5. Its function is as follows. Catalyzes the reversible conversion of 2-phosphoglycerate (2-PG) into phosphoenolpyruvate (PEP). It is essential for the degradation of carbohydrates via glycolysis. This is Enolase from Ruegeria sp. (strain TM1040) (Silicibacter sp.).